The following is a 247-amino-acid chain: UPF0309 protein Teth39_1980 (247 aa).

An SIS domain is found at 31–213; it reads IANSLLKEED…EAEIVFIMIK (183 aa).

It belongs to the UPF0309 family.

The protein is UPF0309 protein Teth39_1980 of Thermoanaerobacter pseudethanolicus (strain ATCC 33223 / 39E) (Clostridium thermohydrosulfuricum).